Reading from the N-terminus, the 249-residue chain is Phosphomannomutase (249 aa).

The active-site Nucleophile is Asp-15. Mg(2+) contacts are provided by Asp-15 and Asp-17. Residue Asp-17 is the Proton donor/acceptor of the active site. Alpha-D-mannose 1-phosphate-binding residues include Arg-24, Arg-126, Arg-137, Arg-144, Ser-182, and Asp-184. 3 residues coordinate Mg(2+): Asp-210, Phe-222, and Thr-227.

Belongs to the eukaryotic PMM family. In terms of assembly, homodimer. Requires Mg(2+) as cofactor. In terms of tissue distribution, expressed in roots, leaves, flag leaves and immature spikes.

The protein resides in the cytoplasm. The catalysed reaction is alpha-D-mannose 1-phosphate = D-mannose 6-phosphate. The protein operates within nucleotide-sugar biosynthesis; GDP-alpha-D-mannose biosynthesis; alpha-D-mannose 1-phosphate from D-fructose 6-phosphate: step 2/2. In terms of biological role, catalyzes the interconversion of mannose-6-phosphate to mannose-1-phosphate, the precursor for the synthesis of GDP-mannose. GDP-mannose is an essential sugar nucleotide for the synthesis of D-mannose-containing cell wall polysaccharides (galactomannans and glucomannans), glycolipids, glycoproteins and the antioxidant L-ascorbate. Can complement the yeast temperature-sensitive mutant sec53-6. This is Phosphomannomutase from Triticum aestivum (Wheat).